The following is a 525-amino-acid chain: uncharacterized protein (525 aa).

The N-terminal stretch at 1 to 21 is a signal peptide; the sequence is MLECLSALLVLFAGGGGSVLA. Residues 22–448 lie on the Extracellular side of the membrane; it reads AVQSKTVADP…ISAASQLDKR (427 aa). Positions 242–264 are disordered; it reads KVSSENCSKDTDDKSGSKKERNT. A helical transmembrane segment spans residues 449-469; sequence IFIFTAITVSITTLMMLGFSY. The Cytoplasmic segment spans residues 470 to 525; sequence RSRVSFRDHSIDDSDDDNDWSDDEVEFDEEYFYSLPVSIPEKGISLDKMAQQLGVE.

The protein resides in the membrane. This is an uncharacterized protein from Saccharomyces cerevisiae (strain ATCC 204508 / S288c) (Baker's yeast).